The sequence spans 177 residues: Phycocyanin PC645 beta subunit (177 aa).

Y18 is a binding site for mesobiliverdin. The (2R,3E)-phycocyanobilin site is built by K28, N35, and D39. C50, D54, and C61 together coordinate 15,16-dihydrobiliverdin. Positions 72, 77, 82, 84, and 85 each coordinate (2R,3E)-phycocyanobilin. Q148 provides a ligand contact to 15,16-dihydrobiliverdin. The (2R,3E)-phycocyanobilin site is built by P154, G156, and C158.

Belongs to the phycobiliprotein family. As to quaternary structure, heterotetramer of 2 different alpha chains and 2 identical beta chains which form 2 alpha-beta heterodimers within the heterotetramer. Post-translationally, contains two phycocyanobilin chromophores, one mesobiliverdin chromophore and one 15,16-dihydrobiliverdin chromophore with binding mediated by both the alpha and beta subunits.

It is found in the plastid. The protein resides in the chloroplast thylakoid membrane. Its function is as follows. Light-harvesting photosynthetic tetrapyrrole chromophore-protein from the phycobiliprotein complex. This chain is Phycocyanin PC645 beta subunit, found in Chroomonas sp. (strain CCMP270).